We begin with the raw amino-acid sequence, 356 residues long: Histidinol-phosphate aminotransferase (356 aa).

K214 carries the N6-(pyridoxal phosphate)lysine modification.

It belongs to the class-II pyridoxal-phosphate-dependent aminotransferase family. Histidinol-phosphate aminotransferase subfamily. In terms of assembly, homodimer. Pyridoxal 5'-phosphate is required as a cofactor.

The enzyme catalyses L-histidinol phosphate + 2-oxoglutarate = 3-(imidazol-4-yl)-2-oxopropyl phosphate + L-glutamate. The protein operates within amino-acid biosynthesis; L-histidine biosynthesis; L-histidine from 5-phospho-alpha-D-ribose 1-diphosphate: step 7/9. The chain is Histidinol-phosphate aminotransferase from Shigella flexneri serotype 5b (strain 8401).